The sequence spans 314 residues: Mitochondrial thiamine pyrophosphate carrier 1 (314 aa).

The next 6 helical transmembrane spans lie at 14–30, 84–100, 116–136, 170–186, 217–233, and 285–302; these read VAAW…GLLA, LLYV…YSLF, LVVG…FDVL, GSIA…SIMF, SAGT…TFPL, and GILV…VSFW. Solcar repeat units follow at residues 14–103, 110–195, and 210–310; these read VAAW…FNRY, EARL…IRIY, and ELAT…AIHY.

The protein belongs to the mitochondrial carrier (TC 2.A.29) family.

Its subcellular location is the mitochondrion inner membrane. Mitochondrial transporter that mediates uptake of thiamine pyrophosphate (ThPP) into mitochondria. This is Mitochondrial thiamine pyrophosphate carrier 1 (TPC1) from Saccharomyces cerevisiae (strain ATCC 204508 / S288c) (Baker's yeast).